Reading from the N-terminus, the 590-residue chain is Glutamine--tRNA ligase (590 aa).

Residues 55-65 (PEPNGYLHIGH) carry the 'HIGH' region motif. Residues 56 to 58 (EPN) and 62 to 68 (HIGHAKS) contribute to the ATP site. L-glutamine-binding residues include aspartate 93 and tyrosine 238. Residues threonine 257 and 292 to 293 (RL) each bind ATP. Positions 299 to 303 (ITSKR) match the 'KMSKS' region motif.

This sequence belongs to the class-I aminoacyl-tRNA synthetase family. As to quaternary structure, monomer.

It localises to the cytoplasm. The catalysed reaction is tRNA(Gln) + L-glutamine + ATP = L-glutaminyl-tRNA(Gln) + AMP + diphosphate. The sequence is that of Glutamine--tRNA ligase from Polynucleobacter asymbioticus (strain DSM 18221 / CIP 109841 / QLW-P1DMWA-1) (Polynucleobacter necessarius subsp. asymbioticus).